The chain runs to 373 residues: MAKKDYYEILGVSRNATQEEIRQAYKKLIKKWHPDRNYENKKLAEEKFKEIQEAYEVLSDPEKRAMYDKFGYVGDVPPNAGGGFRGFGGFEDIFKDFGDFINNDIFNIFFGDQRTSSRKRTKTPRKGEDINISVDVSFEELFTGVKIPLEYDRYEVCEHCHGEGVEPGSGWVTCPKCHGTGTVREERRTFLGVIVNQYTCNQCGGTGKIPGESCRVCGGTGRIRKRHRIEVNIPAGVENGTILRIQGGGHAGYYGGGYGDLYVHVRVVGYTSFERKGNNLIKDLKIDYVDAILGTKVKIKMPDGKIKEVKIPSGVQHGQEIYVYGEGIPDMRTGRRGDLILRINVGIPTKVSRTEKKLLKEIAKLRGKDVRED.

The region spanning 5 to 71 (DYYEILGVSR…EKRAMYDKFG (67 aa)) is the J domain. The CR-type zinc finger occupies 144–226 (GVKIPLEYDR…CGGTGRIRKR (83 aa)). Residues Cys-157, Cys-160, Cys-174, Cys-177, Cys-200, Cys-203, Cys-214, and Cys-217 each contribute to the Zn(2+) site. CXXCXGXG motif repeat units follow at residues 157–164 (CEHCHGEG), 174–181 (CPKCHGTG), 200–207 (CNQCGGTG), and 214–221 (CRVCGGTG).

It belongs to the DnaJ family. In terms of assembly, homodimer. Zn(2+) is required as a cofactor.

It localises to the cytoplasm. Functionally, participates actively in the response to hyperosmotic and heat shock by preventing the aggregation of stress-denatured proteins and by disaggregating proteins, also in an autonomous, DnaK-independent fashion. Unfolded proteins bind initially to DnaJ; upon interaction with the DnaJ-bound protein, DnaK hydrolyzes its bound ATP, resulting in the formation of a stable complex. GrpE releases ADP from DnaK; ATP binding to DnaK triggers the release of the substrate protein, thus completing the reaction cycle. Several rounds of ATP-dependent interactions between DnaJ, DnaK and GrpE are required for fully efficient folding. Also involved, together with DnaK and GrpE, in the DNA replication of plasmids through activation of initiation proteins. This Thermosipho melanesiensis (strain DSM 12029 / CIP 104789 / BI429) protein is Chaperone protein DnaJ.